A 250-amino-acid chain; its full sequence is Carboxy-S-adenosyl-L-methionine synthase (250 aa).

S-adenosyl-L-methionine contacts are provided by residues Tyr-45, 70 to 72 (GCS), 95 to 96 (DN), 123 to 124 (DI), Asn-138, and Arg-205.

The protein belongs to the class I-like SAM-binding methyltransferase superfamily. Cx-SAM synthase family. As to quaternary structure, homodimer.

The catalysed reaction is prephenate + S-adenosyl-L-methionine = carboxy-S-adenosyl-L-methionine + 3-phenylpyruvate + H2O. In terms of biological role, catalyzes the conversion of S-adenosyl-L-methionine (SAM) to carboxy-S-adenosyl-L-methionine (Cx-SAM). This chain is Carboxy-S-adenosyl-L-methionine synthase, found in Marinobacter nauticus (strain ATCC 700491 / DSM 11845 / VT8) (Marinobacter aquaeolei).